Here is a 165-residue protein sequence, read N- to C-terminus: Shikimate kinase (165 aa).

11-16 (GAGKTT) is a binding site for ATP. Residue T15 coordinates Mg(2+). Substrate is bound by residues D33, R57, and G78. R116 lines the ATP pocket. R134 is a binding site for substrate.

The protein belongs to the shikimate kinase family. In terms of assembly, monomer. It depends on Mg(2+) as a cofactor.

The protein localises to the cytoplasm. It catalyses the reaction shikimate + ATP = 3-phosphoshikimate + ADP + H(+). The protein operates within metabolic intermediate biosynthesis; chorismate biosynthesis; chorismate from D-erythrose 4-phosphate and phosphoenolpyruvate: step 5/7. Its function is as follows. Catalyzes the specific phosphorylation of the 3-hydroxyl group of shikimic acid using ATP as a cosubstrate. This chain is Shikimate kinase, found in Bacillus cereus (strain AH187).